A 100-amino-acid chain; its full sequence is Large ribosomal subunit protein bL27 (100 aa).

Residues 1-13 constitute a propeptide that is removed on maturation; it reads MNKLYWLTDLQLF. Positions 17–39 are disordered; that stretch reads KGVGSSKNGRDSNPKYLGAKLGD.

It belongs to the bacterial ribosomal protein bL27 family. The N-terminus is cleaved by ribosomal processing cysteine protease Prp.

The sequence is that of Large ribosomal subunit protein bL27 from Ureaplasma parvum serovar 3 (strain ATCC 700970).